We begin with the raw amino-acid sequence, 374 residues long: Organelle RRM domain-containing protein 1, chloroplastic (374 aa).

The N-terminal 54 residues, 1 to 54, are a transit peptide targeting the chloroplast; sequence MEALIASTSFFVPISNSSSSHIINNRFFPSFYSPNLNFGTFRKTSLSSSHLVFS. Basic and acidic residues predominate over residues 258–271; it reads KDYEGDSTQDSRDQ. Residues 258–279 are disordered; that stretch reads KDYEGDSTQDSRDQDDSESPPV. Positions 282–360 constitute an RRM domain; sequence KKLFITGLSF…WMIVVDVAKT (79 aa).

In terms of assembly, interacts with PCMP-H51/CRR28 and PCMP-H12/OTP82. Interacts with MORF8/RIP1, MORF2/RIP2 and VAR3/OZ1.

The protein localises to the plastid. It is found in the chloroplast. Its function is as follows. Involved in C-to-U editing of chloroplastic RNA. Functions as major chloroplastic editing factor. Controls 62 percent of the chloroplastic editing sites. Binds RNA close to ORRM1-dependent editing sites in vitro. Binds the editing recognition trans-factors PCMP-H51/CRR28 and PCMP-H12/OTP82. The protein is Organelle RRM domain-containing protein 1, chloroplastic of Arabidopsis thaliana (Mouse-ear cress).